The primary structure comprises 421 residues: Adenylosuccinate synthetase (421 aa).

GTP-binding positions include 11–17 (GDEGKGK) and 39–41 (GHT). The Proton acceptor role is filled by aspartate 12. Mg(2+) is bound by residues aspartate 12 and glycine 39. Residues 12-15 (DEGK), 37-40 (NAGH), threonine 129, arginine 143, asparagine 219, threonine 234, and arginine 298 contribute to the IMP site. Histidine 40 functions as the Proton donor in the catalytic mechanism. Position 294–300 (294–300 (VTTGRRR)) interacts with substrate. Residues arginine 300, 326–328 (KLD), and 409–411 (GTG) contribute to the GTP site.

The protein belongs to the adenylosuccinate synthetase family. As to quaternary structure, homodimer. Mg(2+) is required as a cofactor.

Its subcellular location is the cytoplasm. It catalyses the reaction IMP + L-aspartate + GTP = N(6)-(1,2-dicarboxyethyl)-AMP + GDP + phosphate + 2 H(+). It participates in purine metabolism; AMP biosynthesis via de novo pathway; AMP from IMP: step 1/2. Its function is as follows. Plays an important role in the de novo pathway and in the salvage pathway of purine nucleotide biosynthesis. Catalyzes the first committed step in the biosynthesis of AMP from IMP. The chain is Adenylosuccinate synthetase from Paracoccidioides lutzii (strain ATCC MYA-826 / Pb01) (Paracoccidioides brasiliensis).